A 285-amino-acid polypeptide reads, in one-letter code: Bifunctional protein FolD (285 aa).

NADP(+)-binding positions include 165 to 167 (GAS) and Ser190.

Belongs to the tetrahydrofolate dehydrogenase/cyclohydrolase family. In terms of assembly, homodimer.

It catalyses the reaction (6R)-5,10-methylene-5,6,7,8-tetrahydrofolate + NADP(+) = (6R)-5,10-methenyltetrahydrofolate + NADPH. The catalysed reaction is (6R)-5,10-methenyltetrahydrofolate + H2O = (6R)-10-formyltetrahydrofolate + H(+). It functions in the pathway one-carbon metabolism; tetrahydrofolate interconversion. Its function is as follows. Catalyzes the oxidation of 5,10-methylenetetrahydrofolate to 5,10-methenyltetrahydrofolate and then the hydrolysis of 5,10-methenyltetrahydrofolate to 10-formyltetrahydrofolate. This is Bifunctional protein FolD from Cupriavidus metallidurans (strain ATCC 43123 / DSM 2839 / NBRC 102507 / CH34) (Ralstonia metallidurans).